The chain runs to 471 residues: Glutamate--tRNA ligase (471 aa).

The 'HIGH' region motif lies at 9–19 (PSPTGYLHVGG). Zn(2+) is bound by residues cysteine 98, cysteine 100, cysteine 125, and histidine 127. Residues 237–241 (KLSKR) carry the 'KMSKS' region motif. Lysine 240 serves as a coordination point for ATP.

It belongs to the class-I aminoacyl-tRNA synthetase family. Glutamate--tRNA ligase type 1 subfamily. Monomer. Zn(2+) is required as a cofactor.

It is found in the cytoplasm. It carries out the reaction tRNA(Glu) + L-glutamate + ATP = L-glutamyl-tRNA(Glu) + AMP + diphosphate. In terms of biological role, catalyzes the attachment of glutamate to tRNA(Glu) in a two-step reaction: glutamate is first activated by ATP to form Glu-AMP and then transferred to the acceptor end of tRNA(Glu). This chain is Glutamate--tRNA ligase, found in Escherichia coli (strain SMS-3-5 / SECEC).